The chain runs to 458 residues: Bifunctional protein GlmU (458 aa).

A pyrophosphorylase region spans residues 1-228; that stretch reads MHPKLDILIL…DWEVLGVNSK (228 aa). Residues 10-13, lysine 24, glutamine 75, 80-81, 102-104, glycine 139, glutamate 153, asparagine 168, and asparagine 226 each bind UDP-N-acetyl-alpha-D-glucosamine; these read LAAG, GT, and YGD. Aspartate 104 is a binding site for Mg(2+). Asparagine 226 serves as a coordination point for Mg(2+). Positions 229-249 are linker; that stretch reads AQLAELERIHQNEVAQRLLAD. The segment at 250 to 458 is N-acetyltransferase; the sequence is GVTLMDPARL…KRPIKPKKEG (209 aa). The UDP-N-acetyl-alpha-D-glucosamine site is built by arginine 332 and lysine 350. The active-site Proton acceptor is histidine 362. UDP-N-acetyl-alpha-D-glucosamine-binding residues include tyrosine 365 and asparagine 376. Acetyl-CoA contacts are provided by residues alanine 379, 385–386, serine 404, alanine 422, and arginine 439; that span reads NY.

It in the N-terminal section; belongs to the N-acetylglucosamine-1-phosphate uridyltransferase family. This sequence in the C-terminal section; belongs to the transferase hexapeptide repeat family. Homotrimer. Mg(2+) is required as a cofactor.

The protein resides in the cytoplasm. It carries out the reaction alpha-D-glucosamine 1-phosphate + acetyl-CoA = N-acetyl-alpha-D-glucosamine 1-phosphate + CoA + H(+). The catalysed reaction is N-acetyl-alpha-D-glucosamine 1-phosphate + UTP + H(+) = UDP-N-acetyl-alpha-D-glucosamine + diphosphate. The protein operates within nucleotide-sugar biosynthesis; UDP-N-acetyl-alpha-D-glucosamine biosynthesis; N-acetyl-alpha-D-glucosamine 1-phosphate from alpha-D-glucosamine 6-phosphate (route II): step 2/2. Its pathway is nucleotide-sugar biosynthesis; UDP-N-acetyl-alpha-D-glucosamine biosynthesis; UDP-N-acetyl-alpha-D-glucosamine from N-acetyl-alpha-D-glucosamine 1-phosphate: step 1/1. It functions in the pathway bacterial outer membrane biogenesis; LPS lipid A biosynthesis. Catalyzes the last two sequential reactions in the de novo biosynthetic pathway for UDP-N-acetylglucosamine (UDP-GlcNAc). The C-terminal domain catalyzes the transfer of acetyl group from acetyl coenzyme A to glucosamine-1-phosphate (GlcN-1-P) to produce N-acetylglucosamine-1-phosphate (GlcNAc-1-P), which is converted into UDP-GlcNAc by the transfer of uridine 5-monophosphate (from uridine 5-triphosphate), a reaction catalyzed by the N-terminal domain. The chain is Bifunctional protein GlmU from Thiobacillus denitrificans (strain ATCC 25259 / T1).